The sequence spans 95 residues: Small ribosomal subunit protein bS16 (95 aa).

It belongs to the bacterial ribosomal protein bS16 family.

This chain is Small ribosomal subunit protein bS16, found in Streptococcus pneumoniae (strain CGSP14).